The chain runs to 258 residues: Coiled-coil domain-containing protein 107 (258 aa).

A signal peptide spans 1–24; the sequence is MASVVSLAGTLGLLLVSALPEVLG. The segment covering 25–35 has biased composition (basic and acidic residues); the sequence is DRRSPDRRAHP. The interval 25-63 is disordered; it reads DRRSPDRRAHPGDAGQVGPAAAEPRRQSPPSKNQRERAR. Residues 66–86 traverse the membrane as a helical segment; it reads ALPLGALYTAAAVAFVLYKCL. Positions 106–134 form a coiled coil; that stretch reads LQSEQHLAQLTQQLVQTEQHLNSLMAQLD. A disordered region spans residues 203-222; it reads EPLNWNTGTRNLTPPREMQP.

Its subcellular location is the membrane. This chain is Coiled-coil domain-containing protein 107 (CCDC107), found in Bos taurus (Bovine).